The sequence spans 249 residues: Indole-3-glycerol phosphate synthase (249 aa).

It belongs to the TrpC family.

It carries out the reaction 1-(2-carboxyphenylamino)-1-deoxy-D-ribulose 5-phosphate + H(+) = (1S,2R)-1-C-(indol-3-yl)glycerol 3-phosphate + CO2 + H2O. Its pathway is amino-acid biosynthesis; L-tryptophan biosynthesis; L-tryptophan from chorismate: step 4/5. The sequence is that of Indole-3-glycerol phosphate synthase from Pyrobaculum arsenaticum (strain DSM 13514 / JCM 11321 / PZ6).